A 483-amino-acid polypeptide reads, in one-letter code: Alginate biosynthesis protein AlgA (483 aa).

It belongs to the mannose-6-phosphate isomerase type 2 family. In terms of assembly, monomer. Co(2+) serves as cofactor.

It carries out the reaction D-mannose 6-phosphate = D-fructose 6-phosphate. The enzyme catalyses alpha-D-mannose 1-phosphate + GTP + H(+) = GDP-alpha-D-mannose + diphosphate. It functions in the pathway nucleotide-sugar biosynthesis; GDP-alpha-D-mannose biosynthesis; GDP-alpha-D-mannose from alpha-D-mannose 1-phosphate (GTP route): step 1/1. Its pathway is nucleotide-sugar biosynthesis; GDP-alpha-D-mannose biosynthesis; alpha-D-mannose 1-phosphate from D-fructose 6-phosphate: step 1/2. Its function is as follows. Produces a precursor for alginate polymerization. The alginate layer provides a protective barrier against host immune defenses and antibiotics. In Pseudomonas fluorescens, this protein is Alginate biosynthesis protein AlgA (algA).